Reading from the N-terminus, the 309-residue chain is Short-chain dehydrogenase/reductase ARMGADRAFT_1018437 (309 aa).

The NADP(+) site is built by Lys64, Asp86, and Asn113. Ser167 serves as the catalytic Proton donor. NADP(+) is bound by residues Tyr196 and Lys200. Tyr196 serves as the catalytic Proton acceptor. Catalysis depends on Lys200, which acts as the Lowers pKa of active site Tyr.

This sequence belongs to the short-chain dehydrogenases/reductases (SDR) family.

It participates in secondary metabolite biosynthesis. Functionally, short-chain dehydrogenase/reductase, part of the gene cluster that mediates the biosynthesis of melleolides, a range of antifungal and phytotoxic polyketide derivatives composed of an orsellinic acid (OA) moiety esterified to various sesquiterpene alcohols. The first step in melleolides biosynthesis is performed by the delta(6)-protoilludene synthase PRO1 which catalyzes the cyclization of farnesyl diphosphate to protoilludene. The orsellinic acid synthase armB produces OA by condensing acetyl-CoA with 3 malonyl-CoA units in a three-round chain elongation reaction folowed by a C2-C7 ring closure. ArmB further catalyzes the trans-esterification of OA to the various sesquiterpene alcohols resulting from the hydroxylation of protoilludene. The melleolides cluster also includes 5 cytochrome P450 monooxygenases, 4 NAD(+)-dependent oxidoreductases, one flavin-dependent oxidoreductase, and one O-methyltransferase. The cytochrome P450 monooxygenases may be involved in protoilludene hydroxylation to elaborate melleolides with multiple alcohol groups, such as melleolide D, which carries alcohol functionalities at C-4, C-5, C-10, and C-13. The role of the NAD(+)-dependent enzymes remains unknown. Numerous melleolides, including arnamial, show 5'-O-methylation of the aromatic moiety which may be catalyzed by the methyltransferase encoded in the cluster. The flavin-dependent oxidoreductase might represent the dehydrogenase yielding the aldehyde in position 1 of arnamial and other melleolides. Finally, several halogenase localized outside of the cluster, are able to catalyze the transfer of a single chlorine atom to the melleolide backbone, resulting in a 6'-chloromelleolide product. The sequence is that of Short-chain dehydrogenase/reductase ARMGADRAFT_1018437 from Armillaria gallica (Bulbous honey fungus).